A 686-amino-acid chain; its full sequence is tRNA 5-methylaminomethyl-2-thiouridine biosynthesis bifunctional protein MnmC (686 aa).

A tRNA (mnm(5)s(2)U34)-methyltransferase region spans residues 1-258 (MPNIPLRVNS…RRALRRQQLD (258 aa)). Residues 276 to 686 (IGGGVASANL…MRKLIKGKAL (411 aa)) form an FAD-dependent cmnm(5)s(2)U34 oxidoreductase region.

This sequence in the N-terminal section; belongs to the methyltransferase superfamily. tRNA (mnm(5)s(2)U34)-methyltransferase family. The protein in the C-terminal section; belongs to the DAO family. The cofactor is FAD.

Its subcellular location is the cytoplasm. It catalyses the reaction 5-aminomethyl-2-thiouridine(34) in tRNA + S-adenosyl-L-methionine = 5-methylaminomethyl-2-thiouridine(34) in tRNA + S-adenosyl-L-homocysteine + H(+). Functionally, catalyzes the last two steps in the biosynthesis of 5-methylaminomethyl-2-thiouridine (mnm(5)s(2)U) at the wobble position (U34) in tRNA. Catalyzes the FAD-dependent demodification of cmnm(5)s(2)U34 to nm(5)s(2)U34, followed by the transfer of a methyl group from S-adenosyl-L-methionine to nm(5)s(2)U34, to form mnm(5)s(2)U34. This chain is tRNA 5-methylaminomethyl-2-thiouridine biosynthesis bifunctional protein MnmC, found in Shewanella loihica (strain ATCC BAA-1088 / PV-4).